Reading from the N-terminus, the 197-residue chain is Small ribosomal subunit protein uS4c (197 aa).

The 62-residue stretch at 92 to 153 folds into the S4 RNA-binding domain; sequence MRLDAVVYRL…APIVEHAKTF (62 aa).

Belongs to the universal ribosomal protein uS4 family. Part of the 30S ribosomal subunit. Contacts protein S5. The interaction surface between S4 and S5 is involved in control of translational fidelity.

The protein resides in the plastid. The protein localises to the chloroplast. One of the primary rRNA binding proteins, it binds directly to 16S rRNA where it nucleates assembly of the body of the 30S subunit. In terms of biological role, with S5 and S12 plays an important role in translational accuracy. The protein is Small ribosomal subunit protein uS4c (rps4) of Ostreococcus tauri.